The following is a 360-amino-acid chain: Heat-inducible transcription repressor HrcA (360 aa).

Belongs to the HrcA family.

Negative regulator of class I heat shock genes (grpE-dnaK-dnaJ and groELS operons). Prevents heat-shock induction of these operons. In Streptococcus thermophilus (strain CNRZ 1066), this protein is Heat-inducible transcription repressor HrcA.